Here is a 214-residue protein sequence, read N- to C-terminus: Charged multivesicular body protein 2b (214 aa).

A coiled-coil region spans residues 25–55 (QRTITRDRAALEKQERQLELEIKKMAKTGNK). Positions 179–201 (AKAPSAARGLPSASTSKASTISD) are disordered. Polar residues predominate over residues 190–199 (SASTSKASTI). Residues 202-212 (EEIERQLKALG) carry the MIT-interacting motif motif.

This sequence belongs to the SNF7 family. As to quaternary structure, probable core component of the endosomal sorting required for transport complex III (ESCRT-III). ESCRT-III components are thought to multimerize to form a flat lattice on the perimeter membrane of the endosome.

The protein resides in the cytoplasm. It localises to the cytosol. Its subcellular location is the late endosome membrane. Functionally, probable core component of the endosomal sorting required for transport complex III (ESCRT-III) which is involved in multivesicular bodies (MVBs) formation and sorting of endosomal cargo proteins into MVBs. MVBs contain intraluminal vesicles (ILVs) that are generated by invagination and scission from the limiting membrane of the endosome and mostly are delivered to lysosomes enabling degradation of membrane proteins, such as stimulated growth factor receptors, lysosomal enzymes and lipids. This Gallus gallus (Chicken) protein is Charged multivesicular body protein 2b (CHMP2B).